The following is a 397-amino-acid chain: MKILVVNCGSSSLKYQLIDMTSEEALAKGLVERIGIEGSILTQKVNGEKYIIEEPMKDHKKAIELVLKALVDKEHGVISDMSEIAAVGHRVVHGGEKYASSVLIDDEVMEALEDCVKLAPLHNPPNIIGINACRELMPKTPMVAVFDTAFHQTLPDYAYMYPLPYELYEQNGIRKYGFHGTSHRYVSSVASEMMGKDLKDLKVITCHLGNGASLCAVKEGKSVETSMGFTPLAGLAMGTRCGDIDPAILLFMERELKMSPDEVDTVINKKSGVLGISGVSSDFRDIEGAAEEGNKRAKLALDVYHYTVRQTIGAYTAVLNGVDAIVFTAGLGENSAASREEILNGLEYLGIKIDAEKNKQRGKQIEISTEDSKVKVFVIPTDEELMIARDTKEITAK.

Residue asparagine 7 participates in Mg(2+) binding. Lysine 14 contributes to the ATP binding site. Arginine 90 contacts substrate. Aspartate 147 (proton donor/acceptor) is an active-site residue. ATP-binding positions include 207-211 (HLGNG), 282-284 (DFR), and 330-334 (GLGEN). Glutamate 383 contacts Mg(2+).

The protein belongs to the acetokinase family. In terms of assembly, homodimer. Mg(2+) is required as a cofactor. Mn(2+) serves as cofactor.

It localises to the cytoplasm. The catalysed reaction is acetate + ATP = acetyl phosphate + ADP. Its pathway is metabolic intermediate biosynthesis; acetyl-CoA biosynthesis; acetyl-CoA from acetate: step 1/2. Its function is as follows. Catalyzes the formation of acetyl phosphate from acetate and ATP. Can also catalyze the reverse reaction. The chain is Acetate kinase from Clostridium botulinum (strain 657 / Type Ba4).